We begin with the raw amino-acid sequence, 151 residues long: Large-conductance mechanosensitive channel (151 aa).

2 helical membrane passes run 12-32 and 71-91; these read GNIV…ALVT and VLLS…FLVV. The tract at residues 125–151 is disordered; sequence NSNSSGRHEAPGTAGTPPPNYGPRADT.

This sequence belongs to the MscL family. In terms of assembly, homopentamer.

The protein resides in the cell membrane. Channel that opens in response to stretch forces in the membrane lipid bilayer. May participate in the regulation of osmotic pressure changes within the cell. The sequence is that of Large-conductance mechanosensitive channel from Mycobacterium ulcerans (strain Agy99).